Reading from the N-terminus, the 664-residue chain is Glycine--tRNA ligase beta subunit (664 aa).

The protein belongs to the class-II aminoacyl-tRNA synthetase family. In terms of assembly, tetramer of two alpha and two beta subunits.

Its subcellular location is the cytoplasm. The enzyme catalyses tRNA(Gly) + glycine + ATP = glycyl-tRNA(Gly) + AMP + diphosphate. The polypeptide is Glycine--tRNA ligase beta subunit (glyS) (Aquifex aeolicus (strain VF5)).